Reading from the N-terminus, the 375-residue chain is Alanine racemase (375 aa).

The Proton acceptor; specific for D-alanine role is filled by Lys-41. An N6-(pyridoxal phosphate)lysine modification is found at Lys-41. Arg-141 contributes to the substrate binding site. Residue Tyr-270 is the Proton acceptor; specific for L-alanine of the active site. Met-317 provides a ligand contact to substrate.

The protein belongs to the alanine racemase family. Pyridoxal 5'-phosphate serves as cofactor.

It carries out the reaction L-alanine = D-alanine. It participates in amino-acid biosynthesis; D-alanine biosynthesis; D-alanine from L-alanine: step 1/1. Its function is as follows. Catalyzes the interconversion of L-alanine and D-alanine. May also act on other amino acids. The protein is Alanine racemase (alr) of Lactiplantibacillus plantarum (strain ATCC BAA-793 / NCIMB 8826 / WCFS1) (Lactobacillus plantarum).